The chain runs to 88 residues: Phosphocarrier protein HPr (88 aa).

The 88-residue stretch at 1-88 (MASKEFHIVA…ETMTKEGLAE (88 aa)) folds into the HPr domain. Catalysis depends on His-15, which acts as the Pros-phosphohistidine intermediate. A Phosphoserine; by HPrK/P modification is found at Ser-46.

It belongs to the HPr family.

It localises to the cytoplasm. With respect to regulation, phosphorylation on Ser-46 inhibits the phosphoryl transfer from enzyme I to HPr. Its function is as follows. General (non sugar-specific) component of the phosphoenolpyruvate-dependent sugar phosphotransferase system (sugar PTS). This major carbohydrate active-transport system catalyzes the phosphorylation of incoming sugar substrates concomitantly with their translocation across the cell membrane. The phosphoryl group from phosphoenolpyruvate (PEP) is transferred to the phosphoryl carrier protein HPr by enzyme I. Phospho-HPr then transfers it to the PTS EIIA domain. P-Ser-HPr interacts with the catabolite control protein A (CcpA), forming a complex that binds to DNA at the catabolite response elements cre, operator sites preceding a large number of catabolite-regulated genes. Thus, P-Ser-HPr is a corepressor in carbon catabolite repression (CCR), a mechanism that allows bacteria to coordinate and optimize the utilization of available carbon sources. P-Ser-HPr also plays a role in inducer exclusion, in which it probably interacts with several non-PTS permeases and inhibits their transport activity. The polypeptide is Phosphocarrier protein HPr (ptsH) (Lactococcus lactis subsp. cremoris (Streptococcus cremoris)).